We begin with the raw amino-acid sequence, 293 residues long: MRNSFKIMTALALGLFAMQANAKFKVVTTFTVIQDIAQNVAGNAATVESITKPGAEIHEYEPTPKDIVKAQSADLILWNGLNLERWFERFFQNVKDKPAVVVTEGIQPLSIYEGPYKDAPNPHAWMSPSNALIYIENIKNALVKYDPQNAAVYEKNAADYAQKIKQLDEPLRAKLAQIPEAQRWLVTSEGAFSYLAKDYNLKEGYLWPINAEQQGTPQQVRKVIDLVRKNNIPVVFSESTISAKPAQQVAKESGAKYGGVLYVDSLSAKNGPVPTYIDLLNVTVSTIVKGFGK.

The N-terminal stretch at 1-22 is a signal peptide; sequence MRNSFKIMTALALGLFAMQANA. Residues 23 to 48 form an interaction with host components region; it reads KFKVVTTFTVIQDIAQNVAGNAATVE. A divalent metal cation-binding residues include His-58, His-123, Glu-189, and Asp-264.

It belongs to the bacterial solute-binding protein 9 family. Interacts with host laminin and vitronectin. Can interact with both immobilized and soluble vitronectin.

Its subcellular location is the cell outer membrane. It localises to the cell surface. It is found in the periplasm. Functionally, part of an ATP-binding cassette (ABC) transport system involved in metal import. Binds a metal with high affinity and specificity and delivers it to the membrane permease for translocation into the cytoplasm. Acts as an adhesin that promotes binding of H.influenzae to host laminin and vitronectin. In addition, interaction with serum vitronectin plays an important role in bacterial serum resistance. The chain is Putative metal ABC transporter substrate-binding protein Hpf (hpf) from Haemophilus influenzae (strain NTHi 3655).